The chain runs to 459 residues: SLIT-ROBO Rho GTPase-activating protein 2C (459 aa).

The F-BAR domain maps to 22-325 (KEIRAQLTEQ…AVENLDATSD (304 aa)). A compositionally biased stretch (basic and acidic residues) spans 181 to 202 (LKEAEKQEEKQIGKSVKQEDRQ). The interval 181–211 (LKEAEKQEEKQIGKSVKQEDRQTPCSPDSTA) is disordered. The stretch at 363 to 401 (QSELVQRCQQLQSRLSTLKIENEEVKKTMEATLQTIQDI) forms a coiled coil.

Homodimer. Interacts (via F-BAR domain) with SRGAP2/SRGAP2A (via F-BAR domain); formation of the heterodimer inhibits SRGAP2/SRGAP2A function. As to expression, ubiquitously expressed with higher expression in cerebellum. Probably expressed in fetal and adult neurons (at protein level).

Human-specific protein that acts as a key modifier of cortical connectivity in the human brain. Acts by inhibiting the functions of ancestral paralog SRGAP2/SRGAP2A, a postsynaptic protein that regulates excitatory and inhibitory synapse maturation and density in cortical pyramidal neurons. SRGAP2C is unstable but is able to heterodimerize with SRGAP2/SRGAP2A, thereby reducing SRGAP2/SRGAP2A levels through proteasome-dependent degradation. Inhibition of SRGAP2/SRGAP2A by SRGAP2C leads to an increase in synaptic density and protracted synaptic maturation of both excitatory and inhibitory synapses. Modifies cortical circuit connectivity by increasing the number of local and long-range cortical inputs received by layer 2/3 pyramidal neurons. Also able to increase the probability of sensory-evoked responses by layer 2/3 pyramidal neurons. The protein is SLIT-ROBO Rho GTPase-activating protein 2C of Homo sapiens (Human).